We begin with the raw amino-acid sequence, 373 residues long: SUN domain-containing protein 5 (373 aa).

Over 1–103 the chain is Nuclear; the sequence is MPRTRNIGAL…LFCQKVMEKM (103 aa). The helical transmembrane segment at 104–120 threads the bilayer; that stretch reads GLLVLCVFGFWMFSMHL. Topologically, residues 121 to 373 are perinuclear space; that stretch reads PSKVEVWQDD…PKDSHLEPLS (253 aa). A coiled-coil region spans residues 136–180; sequence LQSLRMYQEKVRHHTGEIQDLRGSMNQLIAKLQKMEAISDEQKMA. The 159-residue stretch at 204 to 362 folds into the SUN domain; that stretch reads ASIDFEHTSA…YRVRVHGSVT (159 aa).

As to quaternary structure, probable homotrimer. Interacts with DNAJB13. Post-translationally, highly glycosylated in the Golgi apparatus during spermiogenesis. In terms of tissue distribution, testis-specific, abundantly expressed in spermatocytes and round spermatids.

It localises to the nucleus inner membrane. It is found in the golgi apparatus. Functionally, plays an essential role in anchoring sperm head to the tail. Is responsible for the attachment of the coupling apparatus to the sperm nuclear envelope. The sequence is that of SUN domain-containing protein 5 (Sun5) from Mus musculus (Mouse).